We begin with the raw amino-acid sequence, 144 residues long: D-aminoacyl-tRNA deacylase (144 aa).

The Gly-cisPro motif, important for rejection of L-amino acids signature appears at 136 to 137 (GP).

It belongs to the DTD family. As to quaternary structure, homodimer.

It localises to the cytoplasm. It catalyses the reaction glycyl-tRNA(Ala) + H2O = tRNA(Ala) + glycine + H(+). It carries out the reaction a D-aminoacyl-tRNA + H2O = a tRNA + a D-alpha-amino acid + H(+). An aminoacyl-tRNA editing enzyme that deacylates mischarged D-aminoacyl-tRNAs. Also deacylates mischarged glycyl-tRNA(Ala), protecting cells against glycine mischarging by AlaRS. Acts via tRNA-based rather than protein-based catalysis; rejects L-amino acids rather than detecting D-amino acids in the active site. By recycling D-aminoacyl-tRNA to D-amino acids and free tRNA molecules, this enzyme counteracts the toxicity associated with the formation of D-aminoacyl-tRNA entities in vivo and helps enforce protein L-homochirality. The sequence is that of D-aminoacyl-tRNA deacylase from Corynebacterium glutamicum (strain R).